We begin with the raw amino-acid sequence, 205 residues long: Small ribosomal subunit protein uS4 (205 aa).

A compositionally biased stretch (basic and acidic residues) spans 1 to 16 (MSKRETTKYKIDRRMG). The segment at 1-46 (MSKRETTKYKIDRRMGENIWGRPKSPVNRRDYGPGQHGQRRKGKLS) is disordered. In terms of domain architecture, S4 RNA-binding spans 94 to 157 (SRLDAVIYRA…KQLVLVLESV (64 aa)).

The protein belongs to the universal ribosomal protein uS4 family. In terms of assembly, part of the 30S ribosomal subunit. Contacts protein S5. The interaction surface between S4 and S5 is involved in control of translational fidelity.

Functionally, one of the primary rRNA binding proteins, it binds directly to 16S rRNA where it nucleates assembly of the body of the 30S subunit. Its function is as follows. With S5 and S12 plays an important role in translational accuracy. The chain is Small ribosomal subunit protein uS4 from Bartonella quintana (strain Toulouse) (Rochalimaea quintana).